The sequence spans 466 residues: Histidine--tRNA ligase (466 aa).

It belongs to the class-II aminoacyl-tRNA synthetase family. As to quaternary structure, homodimer.

Its subcellular location is the cytoplasm. The enzyme catalyses tRNA(His) + L-histidine + ATP = L-histidyl-tRNA(His) + AMP + diphosphate + H(+). This is Histidine--tRNA ligase from Bifidobacterium longum subsp. infantis (strain ATCC 15697 / DSM 20088 / JCM 1222 / NCTC 11817 / S12).